A 547-amino-acid chain; its full sequence is Dihydroxy-acid dehydratase (547 aa).

Asp78 is a binding site for Mg(2+). Cys119 provides a ligand contact to [2Fe-2S] cluster. Residues Asp120 and Lys121 each coordinate Mg(2+). An N6-carboxylysine modification is found at Lys121. Residue Cys191 coordinates [2Fe-2S] cluster. Glu439 serves as a coordination point for Mg(2+). The active-site Proton acceptor is the Ser464.

Belongs to the IlvD/Edd family. As to quaternary structure, homodimer. It depends on [2Fe-2S] cluster as a cofactor. Mg(2+) is required as a cofactor.

The enzyme catalyses (2R)-2,3-dihydroxy-3-methylbutanoate = 3-methyl-2-oxobutanoate + H2O. The catalysed reaction is (2R,3R)-2,3-dihydroxy-3-methylpentanoate = (S)-3-methyl-2-oxopentanoate + H2O. Its pathway is amino-acid biosynthesis; L-isoleucine biosynthesis; L-isoleucine from 2-oxobutanoate: step 3/4. The protein operates within amino-acid biosynthesis; L-valine biosynthesis; L-valine from pyruvate: step 3/4. Functions in the biosynthesis of branched-chain amino acids. Catalyzes the dehydration of (2R,3R)-2,3-dihydroxy-3-methylpentanoate (2,3-dihydroxy-3-methylvalerate) into 2-oxo-3-methylpentanoate (2-oxo-3-methylvalerate) and of (2R)-2,3-dihydroxy-3-methylbutanoate (2,3-dihydroxyisovalerate) into 2-oxo-3-methylbutanoate (2-oxoisovalerate), the penultimate precursor to L-isoleucine and L-valine, respectively. The polypeptide is Dihydroxy-acid dehydratase (Archaeoglobus fulgidus (strain ATCC 49558 / DSM 4304 / JCM 9628 / NBRC 100126 / VC-16)).